The following is a 138-amino-acid chain: Basic phospholipase A2 PL-Y (138 aa).

Positions 1 to 16 (MRTLWIMAVLLVGVEG) are cleaved as a signal peptide. 7 cysteine pairs are disulfide-bonded: cysteine 42/cysteine 131, cysteine 44/cysteine 60, cysteine 59/cysteine 111, cysteine 65/cysteine 138, cysteine 66/cysteine 104, cysteine 73/cysteine 97, and cysteine 91/cysteine 102. Ca(2+) contacts are provided by tyrosine 43, glycine 45, and glycine 47. The active site involves histidine 63. Aspartate 64 lines the Ca(2+) pocket. Aspartate 105 is a catalytic residue.

This sequence belongs to the phospholipase A2 family. Group II subfamily. D49 sub-subfamily. The cofactor is Ca(2+). Expressed by the venom gland.

It is found in the secreted. The enzyme catalyses a 1,2-diacyl-sn-glycero-3-phosphocholine + H2O = a 1-acyl-sn-glycero-3-phosphocholine + a fatty acid + H(+). Snake venom phospholipase A2 (PLA2) that can cleave arachidonate at the sn-2 position from phospholipides in the micellar state or in bilayer membranes. PLA2 catalyzes the calcium-dependent hydrolysis of the 2-acyl groups in 3-sn-phosphoglycerides. This Protobothrops flavoviridis (Habu) protein is Basic phospholipase A2 PL-Y.